A 257-amino-acid polypeptide reads, in one-letter code: AA9 family lytic polysaccharide monooxygenase U (257 aa).

The first 19 residues, 1 to 19, serve as a signal peptide directing secretion; sequence MKLYLAAFLGAVATPGAFA. Position 20 (H20) interacts with Cu(2+). N29 and N71 each carry an N-linked (GlcNAc...) asparagine glycan. A disulfide bridge links C74 with C194. H113 lines the Cu(2+) pocket. A glycan (N-linked (GlcNAc...) asparagine) is linked at N161. Q189 contributes to the O2 binding site. Position 191 (Y191) interacts with Cu(2+).

This sequence belongs to the polysaccharide monooxygenase AA9 family. The cofactor is Cu(2+).

It localises to the secreted. It carries out the reaction [(1-&gt;4)-beta-D-glucosyl]n+m + reduced acceptor + O2 = 4-dehydro-beta-D-glucosyl-[(1-&gt;4)-beta-D-glucosyl]n-1 + [(1-&gt;4)-beta-D-glucosyl]m + acceptor + H2O.. Its function is as follows. Lytic polysaccharide monooxygenase (LPMO) that depolymerizes crystalline and amorphous polysaccharides via the oxidation of scissile alpha- or beta-(1-4)-glycosidic bonds, yielding C1 and C4 oxidation products. Catalysis by LPMOs requires the reduction of the active-site copper from Cu(II) to Cu(I) by a reducing agent and H(2)O(2) or O(2) as a cosubstrate. Shows no activity on wheat arabinoxylan, konjac glucomannan, acetylated spruce galactoglucomannan, or cellopentaose. The polypeptide is AA9 family lytic polysaccharide monooxygenase U (Thermothielavioides terrestris (strain ATCC 38088 / NRRL 8126) (Thielavia terrestris)).